We begin with the raw amino-acid sequence, 780 residues long: Probable trehalase (780 aa).

Positions 1–48 are disordered; the sequence is MVDFLPKVTEINPPSEGNDGEDNIKPLSSGSEQRPLKEEGQQGGRRHH. 2 positions are modified to phosphoserine: S52 and S53. T88 bears the Phosphothreonine mark. Position 112 is a phosphoserine (S112). Residues R331, 338–339, N375, R384, 384–386, and G505 contribute to the substrate site; these read WD and RSQ. Residues D507 and E703 each act as proton donor/acceptor in the active site.

The protein belongs to the glycosyl hydrolase 37 family.

It carries out the reaction alpha,alpha-trehalose + H2O = alpha-D-glucose + beta-D-glucose. The polypeptide is Probable trehalase (NTH2) (Saccharomyces cerevisiae (strain ATCC 204508 / S288c) (Baker's yeast)).